Consider the following 217-residue polypeptide: Oxygen regulatory protein NreC (217 aa).

Residues 2–119 (KIVIADDHAV…QLLLAIRTVY (118 aa)) enclose the Response regulatory domain. Asp-53 carries the 4-aspartylphosphate modification. In terms of domain architecture, HTH luxR-type spans 148–213 (TSDPFKILSK…ELVEYALKKK (66 aa)). The segment at residues 172–191 (NKEIAEKLFVSVKTVEAHKT) is a DNA-binding region (H-T-H motif).

Post-translationally, phosphorylated by NreB.

It localises to the cytoplasm. Functionally, member of the two-component regulatory system NreB/NreC involved in the control of dissimilatory nitrate/nitrite reduction in response to oxygen. Phosphorylated NreC binds to a GC-rich palindromic sequence at the promoters of the nitrate (narGHJI) and nitrite (nir) reductase operons, as well as the putative nitrate transporter gene narT, and activates their expression. The polypeptide is Oxygen regulatory protein NreC (nreC) (Staphylococcus aureus (strain bovine RF122 / ET3-1)).